Consider the following 611-residue polypeptide: Muscarinic acetylcholine receptor gar-3 (611 aa).

The Extracellular portion of the chain corresponds to Met1–Met67. Asn28 and Asn33 each carry an N-linked (GlcNAc...) asparagine glycan. Residues Ile68–Val88 form a helical membrane-spanning segment. The Cytoplasmic segment spans residues Ser89–Asn101. A helical membrane pass occupies residues Tyr102 to Phe122. Residues Thr123–Phe140 lie on the Extracellular side of the membrane. A disulfide bridge links Cys138 with Cys218. A helical transmembrane segment spans residues Trp141 to Phe161. Residues Asp162–Lys181 lie on the Cytoplasmic side of the membrane. The chain crosses the membrane as a helical span at residues Ala182–Ile202. Topologically, residues Ser203–Pro227 are extracellular. The chain crosses the membrane as a helical span at residues Tyr228 to Leu248. Residues Tyr249–Thr525 lie on the Cytoplasmic side of the membrane. 4 disordered regions span residues Arg299–Ala364, Ser377–Ser432, Ser446–Ile477, and Phe500–Glu519. The span at Ser307–Ser317 shows a compositional bias: low complexity. Residues Gln503–Glu519 are compositionally biased toward basic and acidic residues. Residues Leu526 to Trp546 form a helical membrane-spanning segment. Residues Glu547–Val557 are Extracellular-facing. Residues Leu558–Ala578 traverse the membrane as a helical segment. The Cytoplasmic portion of the chain corresponds to Leu579–Asn611.

This sequence belongs to the G-protein coupled receptor 1 family. Muscarinic acetylcholine receptor subfamily.

The protein resides in the cell membrane. In terms of biological role, the muscarinic acetylcholine receptor mediates various cellular responses, including inhibition of adenylate cyclase, breakdown of phosphoinositides and modulation of potassium channels through the action of G proteins. Primary transducing effect is Pi turnover. Enhances the release of the neurotransmitter acetlycholine in cholinergic motor neurons, which in turn positively feeds back to depolarize body wall muscles and allows for the maintenance of normal body posture and locomotion. The protein is Muscarinic acetylcholine receptor gar-3 (gar-3) of Caenorhabditis elegans.